The sequence spans 958 residues: Isoleucine--tRNA ligase (958 aa).

The tract at residues 1 to 32 (MSDNQNKPGKPAAKPQSKYPVNMTDTPFPMRG) is disordered. Residues 71–81 (PYANGDIHLGH) carry the 'HIGH' region motif. Glu-590 serves as a coordination point for L-isoleucyl-5'-AMP. The 'KMSKS' region motif lies at 631–635 (KMSKS). Lys-634 is an ATP binding site. Zn(2+) contacts are provided by Cys-921, Cys-924, Cys-941, and Cys-944.

The protein belongs to the class-I aminoacyl-tRNA synthetase family. IleS type 1 subfamily. In terms of assembly, monomer. The cofactor is Zn(2+).

It is found in the cytoplasm. The catalysed reaction is tRNA(Ile) + L-isoleucine + ATP = L-isoleucyl-tRNA(Ile) + AMP + diphosphate. Catalyzes the attachment of isoleucine to tRNA(Ile). As IleRS can inadvertently accommodate and process structurally similar amino acids such as valine, to avoid such errors it has two additional distinct tRNA(Ile)-dependent editing activities. One activity is designated as 'pretransfer' editing and involves the hydrolysis of activated Val-AMP. The other activity is designated 'posttransfer' editing and involves deacylation of mischarged Val-tRNA(Ile). This is Isoleucine--tRNA ligase from Janthinobacterium sp. (strain Marseille) (Minibacterium massiliensis).